The primary structure comprises 113 residues: Prostate and testis expressed protein 2 (113 aa).

The N-terminal stretch at 1-26 (MLVLFLLGTVFLLCPYWGELHDPIKA) is a signal peptide. The UPAR/Ly6 domain occupies 29–110 (IMCYECKKYH…CDHSNYCNLP (82 aa)). 4 cysteine pairs are disulfide-bonded: C31–C57, C34–C42, C49–C80, and C84–C101.

The protein belongs to the PATE family. In terms of tissue distribution, isoform 1 and isoform 2 are expressed in prostate and testis. Isoform 2 is expressed in male and female brain at equivalent levels, in particular in cerebellum, cerebral cortex, corpus callosum, occipital, parrietal and temporal lobes, and pons, but not in amygdala, cerebral peduncle, hippocampus and thalamus.

It is found in the secreted. The protein is Prostate and testis expressed protein 2 (PATE2) of Homo sapiens (Human).